Consider the following 109-residue polypeptide: RNA-binding protein Hfq (109 aa).

Residues 9–68 (DPFLNALRKEKVSVSVYLVNGIKLQGQVEAFDQFCIVLRNTVNQMVYKHAISTIVPAKSV) enclose the Sm domain.

The protein belongs to the Hfq family. Homohexamer.

In terms of biological role, RNA chaperone that binds small regulatory RNA (sRNAs) and mRNAs to facilitate mRNA translational regulation in response to envelope stress, environmental stress and changes in metabolite concentrations. Also binds with high specificity to tRNAs. This chain is RNA-binding protein Hfq, found in Francisella philomiragia subsp. philomiragia (strain ATCC 25017 / CCUG 19701 / FSC 153 / O#319-036).